The chain runs to 54 residues: Ribulose bisphosphate carboxylase large chain (54 aa).

Positions 1-2 (MS) are excised as a propeptide. The residue at position 3 (Pro3) is an N-acetylproline. Lys14 carries the post-translational modification N6,N6,N6-trimethyllysine.

The protein belongs to the RuBisCO large chain family. Type I subfamily. As to quaternary structure, heterohexadecamer of 8 large chains and 8 small chains.

It is found in the plastid. Its subcellular location is the chloroplast. It catalyses the reaction 2 (2R)-3-phosphoglycerate + 2 H(+) = D-ribulose 1,5-bisphosphate + CO2 + H2O. It carries out the reaction D-ribulose 1,5-bisphosphate + O2 = 2-phosphoglycolate + (2R)-3-phosphoglycerate + 2 H(+). Functionally, ruBisCO catalyzes two reactions: the carboxylation of D-ribulose 1,5-bisphosphate, the primary event in carbon dioxide fixation, as well as the oxidative fragmentation of the pentose substrate in the photorespiration process. Both reactions occur simultaneously and in competition at the same active site. In Ilex aquifolium (English holly), this protein is Ribulose bisphosphate carboxylase large chain (rbcL).